A 384-amino-acid polypeptide reads, in one-letter code: 8-amino-7-oxononanoate synthase (384 aa).

Arginine 21 is a binding site for substrate. Residue 108–109 (GF) coordinates pyridoxal 5'-phosphate. Residue histidine 133 coordinates substrate. Serine 179, histidine 207, and threonine 233 together coordinate pyridoxal 5'-phosphate. Position 236 is an N6-(pyridoxal phosphate)lysine (lysine 236). Threonine 350 contributes to the substrate binding site.

The protein belongs to the class-II pyridoxal-phosphate-dependent aminotransferase family. BioF subfamily. As to quaternary structure, homodimer. It depends on pyridoxal 5'-phosphate as a cofactor.

It carries out the reaction 6-carboxyhexanoyl-[ACP] + L-alanine + H(+) = (8S)-8-amino-7-oxononanoate + holo-[ACP] + CO2. The protein operates within cofactor biosynthesis; biotin biosynthesis. Catalyzes the decarboxylative condensation of pimeloyl-[acyl-carrier protein] and L-alanine to produce 8-amino-7-oxononanoate (AON), [acyl-carrier protein], and carbon dioxide. The protein is 8-amino-7-oxononanoate synthase of Erwinia tasmaniensis (strain DSM 17950 / CFBP 7177 / CIP 109463 / NCPPB 4357 / Et1/99).